A 911-amino-acid chain; its full sequence is Alpha-actinin-4 (911 aa).

Residues 1-269 form an actin-binding region; the sequence is MVDYHAANQA…YVSSFYHAFS (269 aa). Positions 12 to 26 are interaction with VCL; sequence QYGPSSGGNGTGGGG. The segment at 12-31 is disordered; the sequence is QYGPSSGGNGTGGGGGMGDY. Gly residues predominate over residues 16–29; that stretch reads SSGGNGTGGGGGMG. Tyr-31 carries the phosphotyrosine modification. Positions 40–61 are interaction with VCL; that stretch reads RDLLLDPAWEKQQRKTFTAWCN. 2 Calponin-homology (CH) domains span residues 50–154 and 163–269; these read KQQR…LRFA and TSAK…HAFS. An LXXLL motif motif is present at residues 84–88; the sequence is LMLLL. Residues 108-126 are interaction with VCL; that stretch reads KINNVNKALDFIASKGVKL. Position 114 is an N6-acetyllysine (Lys-114). A polyphosphoinositide (PIP2)-binding region spans residues 177 to 192; the sequence is TAPYKNVNVQNFHISW. Lys-214 bears the N6-acetyllysine mark. Thr-249 carries the post-translational modification Phosphothreonine. Spectrin repeat units lie at residues 293–403, 413–518, 528–639, and 649–752; these read HLME…WLLN, HLAE…ALEK, QLHL…ALLE, and HLRR…EVEN. 2 positions are modified to N6-acetyllysine: Lys-592 and Lys-625. Residue Ser-696 is modified to Phosphoserine. Residues 736-911 are mediates interaction with MICALL2; the sequence is WEQLLTTIAR…STALYGESDL (176 aa). 2 consecutive EF-hand domains span residues 765-800 and 806-841; these read EQMQEFRASFNHFDKDHGGALGPEEFKACLISLGYD and QGDAEFNRIMSVVDPNHSGLVTFQAFIDFMSRETTD. A Ca(2+)-binding site is contributed by Asp-778. Lys-779 carries the N6-acetyllysine modification. Ca(2+)-binding residues include Asp-780 and Glu-789. N6-acetyllysine is present on Lys-859. Ser-909 carries the post-translational modification Phosphoserine.

This sequence belongs to the alpha-actinin family. Homodimer; antiparallel. Interacts with MAGI1. Interacts with MICALL2 (preferentially in opened conformation); stimulated by RAB13 activation. Identified in a IGF2BP1-dependent mRNP granule complex containing untranslated mRNAs. Component of the CART complex, at least composed of ACTN4, HGS/HRS, MYO5B and TRIM3. Binds TRIM3 at the N-terminus. Interacts with PDLIM2. Identified in a complex with CASK, IQGAP1, MAGI2, NPHS1, SPTAN1 and SPTBN1. Interacts with PPARG and RARA. Binds to VCL; this interaction triggers VCL conformational changes. Interacts with SEPTIN14. Interacts with IGSF8. As to expression, expressed in the foot process layer of podocytes in the kidney glomerulus but not in tubules (at protein level).

The protein resides in the nucleus. It is found in the cytoplasm. Its subcellular location is the cell junction. It localises to the cytoskeleton. The protein localises to the stress fiber. The protein resides in the perinuclear region. Functionally, F-actin cross-linking protein which is thought to anchor actin to a variety of intracellular structures. This is a bundling protein. Probably involved in vesicular trafficking via its association with the CART complex. The CART complex is necessary for efficient transferrin receptor recycling but not for EGFR degradation. Involved in tight junction assembly in epithelial cells probably through interaction with MICALL2. Links MICALL2 to the actin cytoskeleton and recruits it to the tight junctions. May also function as a transcriptional coactivator, stimulating transcription mediated by the nuclear hormone receptors PPARG and RARA. Association with IGSF8 regulates the immune synapse formation and is required for efficient T-cell activation. In Rattus norvegicus (Rat), this protein is Alpha-actinin-4.